Here is a 253-residue protein sequence, read N- to C-terminus: Zinc finger protein GIS (253 aa).

The span at 1 to 10 (MDEATGETET) shows a compositional bias: acidic residues. The interval 1–85 (MDEATGETET…GDNSTDNNSI (85 aa)) is disordered. Polar residues-rich tracts occupy residues 11–21 (QDFMNVESFSQ), 49–63 (SITT…PYQT), and 76–85 (GDNSTDNNSI). The C2H2-type zinc finger occupies 91-113 (FECHYCFRNFPTSQALGGHQNAH).

As to expression, expressed in inflorescence meristems, floral meristems and stem epidermis.

It is found in the nucleus. Probable transcription factor required for the initiation of inflorescence trichomes in response to gibberellin (GA). Mediates the induction of GL1 expression by GA in inflorescence organs and is antagonized in its action by the DELLA repressor GAI. Acts upstream of the trichome initiation regulators GL1 and GL3, and downstream of the GA signaling repressor SPINDLY (SPY). Does not play a significant role in the cytokinin response. Controls trichome branching through GA signaling. Acts downstream of the key regulator STICHEL (STI) in an endoreduplication-independent pathway. Controls trichome cell division indirectly by acting downstream of a key endoreduplication regulator SIAMESE (SIM). This Arabidopsis thaliana (Mouse-ear cress) protein is Zinc finger protein GIS (GIS).